The primary structure comprises 338 residues: tRNA N6-adenosine threonylcarbamoyltransferase (338 aa).

His-109 and His-113 together coordinate Fe cation. Residues 132–136 (AISGA), Asp-165, Gly-178, and Asn-277 each bind substrate. Asp-302 lines the Fe cation pocket.

Belongs to the KAE1 / TsaD family. Requires Fe(2+) as cofactor.

It is found in the cytoplasm. The enzyme catalyses L-threonylcarbamoyladenylate + adenosine(37) in tRNA = N(6)-L-threonylcarbamoyladenosine(37) in tRNA + AMP + H(+). Required for the formation of a threonylcarbamoyl group on adenosine at position 37 (t(6)A37) in tRNAs that read codons beginning with adenine. Is involved in the transfer of the threonylcarbamoyl moiety of threonylcarbamoyl-AMP (TC-AMP) to the N6 group of A37, together with TsaE and TsaB. TsaD likely plays a direct catalytic role in this reaction. The polypeptide is tRNA N6-adenosine threonylcarbamoyltransferase (Chlamydia trachomatis serovar L2b (strain UCH-1/proctitis)).